The chain runs to 112 residues: cAMP-regulated phosphoprotein 19 (112 aa).

N-acetylmethionine is present on methionine 1. Low complexity predominate over residues 1 to 11; that stretch reads MSAEVPEAASA. A disordered region spans residues 1-49; sequence MSAEVPEAASAEEQKEMEDKVTSPEKAEEAKLKARYPHLGQKPGGSDFL. Serine 2 is subject to N-acetylserine. 2 positions are modified to phosphoserine: serine 2 and serine 23. Residues 12–32 are compositionally biased toward basic and acidic residues; that stretch reads EEQKEMEDKVTSPEKAEEAKL. Phosphoserine; by GWL is present on residues serine 62 and serine 104. The tract at residues 74-112 is disordered; the sequence is NKQLPAAAPDKTEVTGDHIPTPQDLPQRKPSLVASKLAG. The residue at position 104 (serine 104) is a Phosphoserine; by PKA. At lysine 109 the chain carries N6-acetyllysine.

Belongs to the endosulfine family. Interacts (when phosphorylated at Ser-62) with PPP2R2D. Interacts with SNCA. Interacts with PPP2R2A; the interaction is direct and this interaction inhibits PP2A activity. In terms of processing, phosphorylation at Ser-62 by MASTL/GWL during mitosis is essential for interaction with PPP2R2D (PR55-delta) and subsequent inactivation of PP2A. Phosphorylated by PKA.

It localises to the cytoplasm. Its function is as follows. Protein phosphatase inhibitor that specifically inhibits protein phosphatase 2A (PP2A) during mitosis. Inhibition of PP2A is enhanced when ARPP19 is phosphorylated. When phosphorylated at Ser-62 during mitosis, specifically interacts with PPP2R2D (PR55-delta) and inhibits its activity, leading to inactivation of PP2A, an essential condition to keep cyclin-B1-CDK1 activity high during M phase. May indirectly enhance GAP-43 expression by binding to the NGF-regulatory region of its mRNA. This is cAMP-regulated phosphoprotein 19 (Arpp19) from Mus musculus (Mouse).